Consider the following 306-residue polypeptide: MLRFDFPGVSIGAAHYEEGPTGATVIHIPAGARTAVDARGGAVGLSGGYDFNHAICLAGGAGYGLEAGAGVSGALLERLEYRTGFAELQLVSSAVIYDFSARSTAVYPDKALGRAALEFAVPGEFPQGRAGAGMSASAGKVDWDRTEITGQGAAFRRLGDVRILAVVVPNPVGVIVDRAGTVVRGNYDAQTGVRRHPVFDYQEAFAEQVPPVTEAGNTTISAIVTNVRMSPVELNQFAKQVHSSMHRGIQPFHTDMDGDTLFAVTTDEIDLPTTPGSSRGRLSVNATALGAIASEVMWDAVLEAGK.

Belongs to the peptidase S58 family.

This chain is Putative NylC-analogous protein, found in Agromyces sp. (strain KY5R).